A 357-amino-acid chain; its full sequence is Protein pelota homolog (357 aa).

The protein belongs to the eukaryotic release factor 1 family. Pelota subfamily. As to quaternary structure, monomer. The cofactor is a divalent metal cation.

It localises to the cytoplasm. Its function is as follows. May function in recognizing stalled ribosomes, interact with stem-loop structures in stalled mRNA molecules, and effect endonucleolytic cleavage of the mRNA. May play a role in the release non-functional ribosomes and degradation of damaged mRNAs. Has endoribonuclease activity. The polypeptide is Protein pelota homolog (Thermococcus gammatolerans (strain DSM 15229 / JCM 11827 / EJ3)).